A 463-amino-acid polypeptide reads, in one-letter code: L-2-hydroxyglutarate dehydrogenase, mitochondrial (463 aa).

Residues 1-52 (MVPALRYLGSVCGRARGIFPGGFSAAHTPASGKSRLLCQGGRRASTSSFDIV) constitute a mitochondrion transit peptide. 2 positions are modified to N6-acetyllysine: lysine 104 and lysine 173.

The protein belongs to the L2HGDH family. Requires FAD as cofactor.

Its subcellular location is the mitochondrion. It carries out the reaction (S)-2-hydroxyglutarate + A = 2-oxoglutarate + AH2. The polypeptide is L-2-hydroxyglutarate dehydrogenase, mitochondrial (L2HGDH) (Bos taurus (Bovine)).